Here is a 398-residue protein sequence, read N- to C-terminus: Lipoyl synthase, mitochondrial (398 aa).

The N-terminal 32 residues, 1 to 32, are a transit peptide targeting the mitochondrion; that stretch reads MIALRVHNTRVVSRSLTVWTRPSPTLTLSRSL. 7 residues coordinate [4Fe-4S] cluster: Cys-117, Cys-122, Cys-128, Cys-147, Cys-151, Cys-154, and Ser-362. The Radical SAM core domain occupies 132-351; it reads KKSEATATIM…RDTALEMGFL (220 aa).

It belongs to the radical SAM superfamily. Lipoyl synthase family. It depends on [4Fe-4S] cluster as a cofactor.

The protein localises to the mitochondrion. The enzyme catalyses [[Fe-S] cluster scaffold protein carrying a second [4Fe-4S](2+) cluster] + N(6)-octanoyl-L-lysyl-[protein] + 2 oxidized [2Fe-2S]-[ferredoxin] + 2 S-adenosyl-L-methionine + 4 H(+) = [[Fe-S] cluster scaffold protein] + N(6)-[(R)-dihydrolipoyl]-L-lysyl-[protein] + 4 Fe(3+) + 2 hydrogen sulfide + 2 5'-deoxyadenosine + 2 L-methionine + 2 reduced [2Fe-2S]-[ferredoxin]. Its pathway is protein modification; protein lipoylation via endogenous pathway; protein N(6)-(lipoyl)lysine from octanoyl-[acyl-carrier-protein]: step 2/2. In terms of biological role, catalyzes the radical-mediated insertion of two sulfur atoms into the C-6 and C-8 positions of the octanoyl moiety bound to the lipoyl domains of lipoate-dependent enzymes, thereby converting the octanoylated domains into lipoylated derivatives. The protein is Lipoyl synthase, mitochondrial of Scheffersomyces stipitis (strain ATCC 58785 / CBS 6054 / NBRC 10063 / NRRL Y-11545) (Yeast).